Here is a 284-residue protein sequence, read N- to C-terminus: Alpha-S1-casein (284 aa).

The first 15 residues, 1–15, serve as a signal peptide directing secretion; it reads MKLLILTCLVAAALA. Disordered regions lie at residues 21–44 and 78–111; these read RRNA…IVKQ and SSAE…SATE. Composition is skewed to low complexity over residues 24-36 and 78-99; these read AVSS…NSSS and SSAE…SSSS. 8 positions are modified to phosphoserine: Ser79, Ser93, Ser94, Ser95, Ser96, Ser97, Ser98, and Ser99. 10 tandem repeats follow at residues 138–143, 144–149, 150–155, 156–161, 162–167, 168–173, 174–179, 180–185, 186–191, and 192–197. The tract at residues 138–197 is 10 X 6 AA tandem repeats; that stretch reads LLQQASLAQQASLAQQASLAQQALLAQQPSLAQQAALAQQASLAQQASLAQQASLAQKHH.

It belongs to the alpha-casein family. Mammary gland specific. Secreted in milk.

It localises to the secreted. Important role in the capacity of milk to transport calcium phosphate. The protein is Alpha-S1-casein (Csn1s1) of Rattus norvegicus (Rat).